A 600-amino-acid chain; its full sequence is Adenine deaminase 4 (600 aa).

It belongs to the metallo-dependent hydrolases superfamily. Adenine deaminase family. It depends on Mn(2+) as a cofactor.

It carries out the reaction adenine + H2O + H(+) = hypoxanthine + NH4(+). The protein is Adenine deaminase 4 of Rhizobium meliloti (strain 1021) (Ensifer meliloti).